Here is a 283-residue protein sequence, read N- to C-terminus: MTNITTWIDEYHKGSRFGLNGKILIKKTSKYQEIILIENEYYGKALMLDGCWMTSLKDEKYYHECLVHPALSSIEEKSNILIIGGGDGGTVRECVKYSQISKIDLVEIDEEVIKISKKFLKEIGGEAWNDKRLEIHVDDGVKWVKKTRDNFYDVIFIDSSDPSEFSNLLFSDSFYKECKRILTPSGILATQSESPESFKNIHINILKTLKNIFKSSETMYSFVPIYPSGIWSWTFASSKNLNLSKQNYDEVKKIEKGCEIWNLNFQNAAFKMMPNKIVKELDS.

A PABS domain is found at 5–238; the sequence is TTWIDEYHKG…GIWSWTFASS (234 aa). Gln32 provides a ligand contact to S-methyl-5'-thioadenosine. Spermidine-binding residues include His63 and Asp87. Residues Glu107 and 139–140 each bind S-methyl-5'-thioadenosine; that span reads DG. Asp158 functions as the Proton acceptor in the catalytic mechanism. A spermidine-binding site is contributed by 158–161; that stretch reads DSSD.

This sequence belongs to the spermidine/spermine synthase family. As to quaternary structure, homodimer or homotetramer.

It is found in the cytoplasm. It carries out the reaction S-adenosyl 3-(methylsulfanyl)propylamine + putrescine = S-methyl-5'-thioadenosine + spermidine + H(+). It participates in amine and polyamine biosynthesis; spermidine biosynthesis; spermidine from putrescine: step 1/1. Functionally, catalyzes the irreversible transfer of a propylamine group from the amino donor S-adenosylmethioninamine (decarboxy-AdoMet) to putrescine (1,4-diaminobutane) to yield spermidine. This chain is Polyamine aminopropyltransferase, found in Prochlorococcus marinus (strain MIT 9215).